The primary structure comprises 287 residues: Nucleotide-binding protein Ppro_0977 (287 aa).

ATP is bound at residue 8-15 (GMSGSGKS). 59–62 (DIRG) contributes to the GTP binding site.

Belongs to the RapZ-like family.

Its function is as follows. Displays ATPase and GTPase activities. This is Nucleotide-binding protein Ppro_0977 from Pelobacter propionicus (strain DSM 2379 / NBRC 103807 / OttBd1).